A 315-amino-acid polypeptide reads, in one-letter code: Cytochrome c biogenesis protein CcsA (315 aa).

Transmembrane regions (helical) follow at residues 14-34 (VVSLGLAAFLFLLIALPISFW), 72-92 (ISNLYESLCFLTWGCTLAQLF), 101-121 (IVSAVATPVSLLSIGFASFVL), 146-166 (VIMCSYAALLIGSILSFGVFL), 221-241 (SITAGFLLLTVGLISGAVWAN), 255-272 (TWALICWLVYAAYLHTRL), and 282-302 (AILAIAGFFVIIVCYIGVNLL).

It belongs to the CcmF/CycK/Ccl1/NrfE/CcsA family. As to quaternary structure, may interact with ccs1.

The protein localises to the cellular thylakoid membrane. Its function is as follows. Required during biogenesis of c-type cytochromes (cytochrome c6 and cytochrome f) at the step of heme attachment. The sequence is that of Cytochrome c biogenesis protein CcsA from Prochlorococcus marinus (strain NATL1A).